The chain runs to 97 residues: Large ribosomal subunit protein bL28 (97 aa).

The protein belongs to the bacterial ribosomal protein bL28 family.

This is Large ribosomal subunit protein bL28 from Bartonella quintana (strain Toulouse) (Rochalimaea quintana).